Consider the following 548-residue polypeptide: Viridiflorene synthase (548 aa).

Residues aspartate 301, aspartate 305, aspartate 444, threonine 448, and glutamate 452 each coordinate Mg(2+). The short motif at 301 to 305 (DDTFD) is the DDXXD motif element.

It belongs to the terpene synthase family. Tpsa subfamily. Mg(2+) serves as cofactor. Expressed in stem and leaf trichomes. Detected in roots, fruits and flowers.

The protein localises to the cytoplasm. The catalysed reaction is (2E,6E)-farnesyl diphosphate = viridiflorene + diphosphate. The protein operates within secondary metabolite biosynthesis; terpenoid biosynthesis. Functionally, sesquiterpene synthase involved in the production of viridiflorene from (E,E)-farnesyl diphosphate. Can also use (Z,Z)-FPP to make several unidentified sesquiterpenes. This chain is Viridiflorene synthase, found in Solanum lycopersicum (Tomato).